The primary structure comprises 104 residues: ATP-dependent Clp protease adapter protein ClpS (104 aa).

Belongs to the ClpS family. In terms of assembly, binds to the N-terminal domain of the chaperone ClpA.

Involved in the modulation of the specificity of the ClpAP-mediated ATP-dependent protein degradation. This is ATP-dependent Clp protease adapter protein ClpS from Hydrogenovibrio crunogenus (strain DSM 25203 / XCL-2) (Thiomicrospira crunogena).